The primary structure comprises 490 residues: Protein nucleotidyltransferase YdiU (490 aa).

G94, G96, R97, K117, D129, G130, R180, and R187 together coordinate ATP. Catalysis depends on D256, which acts as the Proton acceptor. Positions 257 and 266 each coordinate Mg(2+). D266 serves as a coordination point for ATP.

It belongs to the SELO family. Mg(2+) is required as a cofactor. Mn(2+) serves as cofactor.

The enzyme catalyses L-seryl-[protein] + ATP = 3-O-(5'-adenylyl)-L-seryl-[protein] + diphosphate. It catalyses the reaction L-threonyl-[protein] + ATP = 3-O-(5'-adenylyl)-L-threonyl-[protein] + diphosphate. It carries out the reaction L-tyrosyl-[protein] + ATP = O-(5'-adenylyl)-L-tyrosyl-[protein] + diphosphate. The catalysed reaction is L-histidyl-[protein] + UTP = N(tele)-(5'-uridylyl)-L-histidyl-[protein] + diphosphate. The enzyme catalyses L-seryl-[protein] + UTP = O-(5'-uridylyl)-L-seryl-[protein] + diphosphate. It catalyses the reaction L-tyrosyl-[protein] + UTP = O-(5'-uridylyl)-L-tyrosyl-[protein] + diphosphate. In terms of biological role, nucleotidyltransferase involved in the post-translational modification of proteins. It can catalyze the addition of adenosine monophosphate (AMP) or uridine monophosphate (UMP) to a protein, resulting in modifications known as AMPylation and UMPylation. The sequence is that of Protein nucleotidyltransferase YdiU from Clostridium beijerinckii (strain ATCC 51743 / NCIMB 8052) (Clostridium acetobutylicum).